Reading from the N-terminus, the 543-residue chain is Carboxypeptidase Y homolog A (543 aa).

The signal sequence occupies residues 1 to 17; that stretch reads MKFLTTGLLATAALAAA. Residues 18–124 constitute a propeptide that is removed on maturation; the sequence is QEQHVLQAED…KLHNYDLRVK (107 aa). 5 disulfides stabilise this stretch: cysteine 179–cysteine 419, cysteine 313–cysteine 327, cysteine 337–cysteine 360, cysteine 344–cysteine 353, and cysteine 382–cysteine 389. An N-linked (GlcNAc...) asparagine glycan is attached at asparagine 210. Serine 266 is a catalytic residue. Aspartate 458 is a catalytic residue. Residue asparagine 509 is glycosylated (N-linked (GlcNAc...) asparagine). Histidine 520 is an active-site residue.

It belongs to the peptidase S10 family.

It localises to the vacuole. The enzyme catalyses Release of a C-terminal amino acid with broad specificity.. Its function is as follows. Vacuolar carboxypeptidase involved in degradation of small peptides. Digests preferentially peptides containing an aliphatic or hydrophobic residue in P1' position, as well as methionine, leucine or phenylalanine in P1 position of ester substrate. The protein is Carboxypeptidase Y homolog A (cpyA) of Trichophyton verrucosum (strain HKI 0517).